Reading from the N-terminus, the 886-residue chain is Chitin synthase 3 (886 aa).

Disordered regions lie at residues 1-70 (MQQG…YQTD) and 86-138 (PYEP…AGGG). Positions 7 to 17 (LDDRPYGRPEQ) are enriched in basic and acidic residues. Residues 37-56 (PSDQLQLNAAQSVDNLSRNS) show a composition bias toward polar residues. Residue N51 is glycosylated (N-linked (GlcNAc...) asparagine). The segment covering 106-122 (YDHDDLRPMLPHQDSHA) has biased composition (basic and acidic residues). An N-linked (GlcNAc...) asparagine glycan is attached at N196. 7 helical membrane-spanning segments follow: residues 428–448 (SAFG…YVAL), 526–546 (RWLN…YQFF), 556–576 (VMLF…WFAV), 602–622 (ILGV…FVLS), 637–657 (MVYF…FIAV), 683–703 (TLIV…FLMF), and 712–732 (FVQY…YAFC). The tract at residues 745-768 (DQAEKLPSVSTKDGSGKTDLPDES) is disordered. The next 2 membrane-spanning stretches (helical) occupy residues 813 to 833 (VLAW…AAGL) and 858 to 878 (VVLW…MWFL).

This sequence belongs to the chitin synthase family. Class I subfamily.

The protein localises to the cell membrane. It carries out the reaction [(1-&gt;4)-N-acetyl-beta-D-glucosaminyl](n) + UDP-N-acetyl-alpha-D-glucosamine = [(1-&gt;4)-N-acetyl-beta-D-glucosaminyl](n+1) + UDP + H(+). Its function is as follows. Polymerizes chitin, a structural polymer of the cell wall and septum, by transferring the sugar moiety of UDP-GlcNAc to the non-reducing end of the growing chitin polymer. Involved in tolerance to hyperosmotic conditions. CHS3 is the only V.dahliae chitin synthase that is not involved in virulence. The sequence is that of Chitin synthase 3 from Verticillium dahliae (strain VdLs.17 / ATCC MYA-4575 / FGSC 10137) (Verticillium wilt).